Reading from the N-terminus, the 27-residue chain is AnmTX Sco 9a-1 (27 aa).

Position 6 is a hydroxyproline (Pro-6). Cystine bridges form between Cys-7–Cys-18 and Cys-10–Cys-25.

In terms of biological role, has analgesic and anti-inflammatory activity in vivo. At a dose of 0.1 and 1 mg/kg, exhibits anti-inflammatory activity by reducing the volume of edema during 24 h better than the nonsteroidal anti-inflammatory drug, Diclofenac, at dose of 1 mg/kg in a mouse model of acute local lambda-carrageenan-induced inflammation. At a dose of 1 mg/kg, reduces the content of tumor necrosis factor-alpha (TNF-alpha). Demonstrates a significant analgesic effect on acute pain sensitivity in the carrageenan-induced thermal hyperalgesia model at doses of 0.1 and 1 mg/kg. Not toxic in mice, however stimulates exploratory motivation and active search behavior, and demonstrates an anti-anxiety effect. Does not exhibit any effect on currents of rat acid-sensing ion channels ASIC1a or ASIC3. The sequence is that of AnmTX Sco 9a-1 from Stomphia coccinea (Spotted swimming anemone).